A 207-amino-acid polypeptide reads, in one-letter code: Dephospho-CoA kinase (207 aa).

A DPCK domain is found at 12 to 207 (LIGITGMIGG…LYSTLLGKML (196 aa)). An ATP-binding site is contributed by 20 to 25 (GGGKST).

It belongs to the CoaE family.

The protein localises to the cytoplasm. It catalyses the reaction 3'-dephospho-CoA + ATP = ADP + CoA + H(+). It participates in cofactor biosynthesis; coenzyme A biosynthesis; CoA from (R)-pantothenate: step 5/5. Functionally, catalyzes the phosphorylation of the 3'-hydroxyl group of dephosphocoenzyme A to form coenzyme A. This is Dephospho-CoA kinase from Leptospira interrogans serogroup Icterohaemorrhagiae serovar Lai (strain 56601).